The primary structure comprises 477 residues: Bifunctional protein HldE (477 aa).

Residues 1–318 (MKVTLPEFER…ENAVRGRADT (318 aa)) form a ribokinase region. Residue K179 is modified to N6-acetyllysine. 195–198 (NLSE) is a binding site for ATP. The active site involves D264. The tract at residues 344-477 (MTNGVFDILH…IKKIQQDKKG (134 aa)) is cytidylyltransferase.

In the N-terminal section; belongs to the carbohydrate kinase PfkB family. This sequence in the C-terminal section; belongs to the cytidylyltransferase family. In terms of assembly, homodimer.

The catalysed reaction is D-glycero-beta-D-manno-heptose 7-phosphate + ATP = D-glycero-beta-D-manno-heptose 1,7-bisphosphate + ADP + H(+). The enzyme catalyses D-glycero-beta-D-manno-heptose 1-phosphate + ATP + H(+) = ADP-D-glycero-beta-D-manno-heptose + diphosphate. The protein operates within nucleotide-sugar biosynthesis; ADP-L-glycero-beta-D-manno-heptose biosynthesis; ADP-L-glycero-beta-D-manno-heptose from D-glycero-beta-D-manno-heptose 7-phosphate: step 1/4. It participates in nucleotide-sugar biosynthesis; ADP-L-glycero-beta-D-manno-heptose biosynthesis; ADP-L-glycero-beta-D-manno-heptose from D-glycero-beta-D-manno-heptose 7-phosphate: step 3/4. In terms of biological role, catalyzes the phosphorylation of D-glycero-D-manno-heptose 7-phosphate at the C-1 position to selectively form D-glycero-beta-D-manno-heptose-1,7-bisphosphate. Its function is as follows. Catalyzes the ADP transfer from ATP to D-glycero-beta-D-manno-heptose 1-phosphate, yielding ADP-D-glycero-beta-D-manno-heptose. The sequence is that of Bifunctional protein HldE from Escherichia coli O9:H4 (strain HS).